Reading from the N-terminus, the 161-residue chain is Disulfide bond formation protein B (161 aa).

Over 1 to 8 (MQANSRAY) the chain is Cytoplasmic. A helical transmembrane segment spans residues 9–25 (FLLIAFISFGLVGFALY). Topologically, residues 26–43 (LQFEKGYQPCPLCIMQRF) are periplasmic. A disulfide bond links Cys-35 and Cys-38. A helical transmembrane segment spans residues 44-58 (AFIGIGLFSLLAVIA). Residues 59-63 (QNTRS) lie on the Cytoplasmic side of the membrane. A helical transmembrane segment spans residues 64–81 (LWQGLGMLSGVGGIAVAV). Residues 82 to 136 (YHVSLLLNPKASCGIDPLENWVNALPTAKVLPQVFYSDGLCTAPLPPVLGLSVPA) are Periplasmic-facing. Cys-94 and Cys-122 are disulfide-bonded. Residues 137–155 (WSLIWLFILTLTLAVGLIR) traverse the membrane as a helical segment. At 156-161 (REKNFR) the chain is on the cytoplasmic side.

The protein belongs to the DsbB family.

It is found in the cell inner membrane. Its function is as follows. Required for disulfide bond formation in some periplasmic proteins. Acts by oxidizing the DsbA protein. The sequence is that of Disulfide bond formation protein B from Cupriavidus pinatubonensis (strain JMP 134 / LMG 1197) (Cupriavidus necator (strain JMP 134)).